Reading from the N-terminus, the 121-residue chain is Small ribosomal subunit protein eS24 (121 aa).

The protein belongs to the eukaryotic ribosomal protein eS24 family.

In Pyrobaculum arsenaticum (strain DSM 13514 / JCM 11321 / PZ6), this protein is Small ribosomal subunit protein eS24.